Here is an 855-residue protein sequence, read N- to C-terminus: DNA mismatch repair protein MutS (855 aa).

ATP is bound at residue 616–623; it reads GPNMGGKS.

This sequence belongs to the DNA mismatch repair MutS family.

Functionally, this protein is involved in the repair of mismatches in DNA. It is possible that it carries out the mismatch recognition step. This protein has a weak ATPase activity. The sequence is that of DNA mismatch repair protein MutS from Salmonella schwarzengrund (strain CVM19633).